The chain runs to 121 residues: uncharacterized protein (121 aa).

2 helical membrane passes run 26–46 and 72–92; these read FIAL…ILVL and AFLT…WLGL.

It is found in the membrane. This is an uncharacterized protein from Saccharomyces cerevisiae (strain ATCC 204508 / S288c) (Baker's yeast).